A 527-amino-acid polypeptide reads, in one-letter code: Flagellar radial spoke protein 5 (527 aa).

Residues 1–22 (MSEPGEEPVAAPAGPAPDPVLN) are disordered. Residues 101–153 (RKWNELTIQAKQLEQEVAGLKGPDAEAKQAELENVKVQIADAEAAVAEVKQSF) are a coiled coil. Residues Arg-191 and Arg-366 each carry the asymmetric dimethylarginine modification.

The protein belongs to the aldo/keto reductase family. Asymmetrically dimethylated at Arg-191 and Arg-366 during flagellum resorption. Probably methylated by PRMT1.

Its subcellular location is the cytoplasm. It localises to the cytoskeleton. The protein localises to the flagellum axoneme. Its function is as follows. Flagellar radial spokes contribute to the regulation of dynein arm activity and thus the pattern of flagellar bending. They consist of a thin stalk, which is attached to the a subfiber of the outer doublet microtubule, and a bulbous head, which is attached to the stalk and appears to interact with the projections from the central pair of microtubules. This Chlamydomonas reinhardtii (Chlamydomonas smithii) protein is Flagellar radial spoke protein 5.